A 307-amino-acid polypeptide reads, in one-letter code: Voltage-dependent anion channel-forming protein sll1024 (307 aa).

The next 4 helical transmembrane spans lie at 26–46 (VIPA…GVTL), 54–74 (FSIP…LLVF), 226–246 (LIFL…HWAT), and 247–267 (AFVV…GVEI).

This sequence belongs to the anion channel-forming bestrophin (TC 1.A.46) family.

Its subcellular location is the cell membrane. This Synechocystis sp. (strain ATCC 27184 / PCC 6803 / Kazusa) protein is Voltage-dependent anion channel-forming protein sll1024.